Here is a 37-residue protein sequence, read N- to C-terminus: Large ribosomal subunit protein bL36 (37 aa).

The protein belongs to the bacterial ribosomal protein bL36 family.

In Desulforudis audaxviator (strain MP104C), this protein is Large ribosomal subunit protein bL36.